The chain runs to 506 residues: MKKAEMGRFNISPDEDSSSYSSNSDFNYSYPTKQAALKSHYADVDPENQNFLLESNLGKKKYETDFHPGTTSFGMSVFNLSNAIVGSGILGLSYAMANTGIALFIILLTFVSIFSLYSVHLLLKTANEGGSLLYEQLGHKAFGMVGKLTASGSITMQNIGAMSSYLFIVKYELPLVIQALMNIEDTNGLWYLNGDYLVLLVSLVLILPLSLLRNLGYLGYTSGLSLLCMMFFLIVVIFKKFQISCPAEIAFLVNETVNSSLTQPATFLPDMGFNRTESDSCQPRYFIFNSQTVYAVPILTFSFVCHPAILPIYEELKGRSRRRMMNVSKISFFAMFLMYLLAALFGYLTFYGHVESELLHTYSSVMETDILLLIVRLAVLVAVTLTVPVVIFPIRSSITHLLCASKEFSWWRHSVITVSILVFTNLLVIFVPNIRDIFGFIGASAAAMLIFILPSAFYIKLVKKEPMKSVQKIGAMFFLLSGIVVMTGSMALIVLDWVHNAPGGGH.

The segment at 1–23 (MKKAEMGRFNISPDEDSSSYSSN) is disordered. Over 1 to 76 (MKKAEMGRFN…HPGTTSFGMS (76 aa)) the chain is Cytoplasmic. The tract at residues 1–96 (MKKAEMGRFN…SGILGLSYAM (96 aa)) is regulates protein turnover upon amino acid deprivation. Ser-12, Ser-21, Ser-22, and Ser-55 each carry phosphoserine. A helical transmembrane segment spans residues 77–96 (VFNLSNAIVGSGILGLSYAM). Position 82 (Asn-82) interacts with Na(+). Residues 97–102 (ANTGIA) lie on the Extracellular side of the membrane. A helical transmembrane segment spans residues 103-123 (LFIILLTFVSIFSLYSVHLLL). The Cytoplasmic segment spans residues 124 to 158 (KTANEGGSLLYEQLGHKAFGMVGKLTASGSITMQN). A helical membrane pass occupies residues 159-177 (IGAMSSYLFIVKYELPLVI). The Extracellular segment spans residues 178-188 (QALMNIEDTNG). Residues 189–209 (LWYLNGDYLVLLVSLVLILPL) traverse the membrane as a helical segment. Residues 210–217 (SLLRNLGY) lie on the Cytoplasmic side of the membrane. The chain crosses the membrane as a helical span at residues 218 to 238 (LGYTSGLSLLCMMFFLIVVIF). Topologically, residues 239–292 (KKFQISCPAEIAFLVNETVNSSLTQPATFLPDMGFNRTESDSCQPRYFIFNSQT) are extracellular. Cys-245 and Cys-281 form a disulfide bridge. N-linked (GlcNAc...) asparagine glycosylation is found at Asn-258 and Asn-274. The helical transmembrane segment at 293-313 (VYAVPILTFSFVCHPAILPIY) threads the bilayer. Residues 314 to 329 (EELKGRSRRRMMNVSK) are Cytoplasmic-facing. A helical membrane pass occupies residues 330–350 (ISFFAMFLMYLLAALFGYLTF). Topologically, residues 351 to 371 (YGHVESELLHTYSSVMETDIL) are extracellular. Residues 372–392 (LLIVRLAVLVAVTLTVPVVIF) traverse the membrane as a helical segment. Thr-386 lines the Na(+) pocket. Residues 393–413 (PIRSSITHLLCASKEFSWWRH) lie on the Cytoplasmic side of the membrane. Residues 414–434 (SVITVSILVFTNLLVIFVPNI) traverse the membrane as a helical segment. Over 435–436 (RD) the chain is Extracellular. A helical transmembrane segment spans residues 437–457 (IFGFIGASAAAMLIFILPSAF). The Cytoplasmic portion of the chain corresponds to 458–472 (YIKLVKKEPMKSVQK). The chain crosses the membrane as a helical span at residues 473–495 (IGAMFFLLSGIVVMTGSMALIVL). Residues 496–506 (DWVHNAPGGGH) lie on the Extracellular side of the membrane.

The protein belongs to the amino acid/polyamine transporter 2 family. Polyubiquitination by NEDD4L regulates the degradation and the activity of SLC38A2.

It localises to the cell membrane. The enzyme catalyses L-alanine(in) + Na(+)(in) = L-alanine(out) + Na(+)(out). It carries out the reaction glycine(in) + Na(+)(in) = glycine(out) + Na(+)(out). It catalyses the reaction L-serine(in) + Na(+)(in) = L-serine(out) + Na(+)(out). The catalysed reaction is L-proline(in) + Na(+)(in) = L-proline(out) + Na(+)(out). The enzyme catalyses L-methionine(in) + Na(+)(in) = L-methionine(out) + Na(+)(out). It carries out the reaction L-histidine(in) + Na(+)(in) = L-histidine(out) + Na(+)(out). It catalyses the reaction L-asparagine(in) + Na(+)(in) = L-asparagine(out) + Na(+)(out). The catalysed reaction is L-glutamine(in) + Na(+)(in) = L-glutamine(out) + Na(+)(out). The enzyme catalyses L-threonine(in) + Na(+)(in) = L-threonine(out) + Na(+)(out). It carries out the reaction L-leucine(in) + Na(+)(in) = L-leucine(out) + Na(+)(out). It catalyses the reaction L-phenylalanine(in) + Na(+)(in) = L-phenylalanine(out) + Na(+)(out). Its activity is regulated as follows. Inhibited by N-methyl-D-glucamine. Inhibited by choline. Allosteric regulation of sodium ions binding by pH. Its function is as follows. Symporter that cotransports neutral amino acids and sodium ions from the extracellular to the intracellular side of the cell membrane. The transport is pH-sensitive, Li(+)-intolerant, electrogenic, driven by the Na(+) electrochemical gradient and cotransports of neutral amino acids and sodium ions with a stoichiometry of 1:1. May function in the transport of amino acids at the blood-brain barrier. May function in the transport of amino acids in the supply of maternal nutrients to the fetus through the placenta. Maintains a key metabolic glutamine/glutamate balance underpinning retrograde signaling by dendritic release of the neurotransmitter glutamate. Transports L-proline in differentiating osteoblasts for the efficient synthesis of proline-enriched proteins and provides proline essential for osteoblast differentiation and bone formation during bone development. In Bos taurus (Bovine), this protein is Sodium-coupled neutral amino acid symporter 2.